The sequence spans 114 residues: Ig heavy chain V region GOM (114 aa).

The Ig-like domain occupies 1-112 (EVQLVESGGD…YWGQGTLVTV (112 aa)).

This is Ig heavy chain V region GOM from Canis lupus familiaris (Dog).